The primary structure comprises 500 residues: MENSQMWLLWGALSVALFFYFSTLRRRYAGGKPLPPGPTPLPLIGNLHLVGGGTFHHKLRDLARVHGPVMTLKLGLATNVVISSREAAIEAYTKYDRHLAARATPDTFRACGFADRSMVFIPSSDPQWKALRGIHASHVFTPRVLAAVRPIRERKVGDLIAYLRAHAGEEVLVGHAMYTGILNMVSFSYFSVDIVDMGSQMARELREVVDDIILVVGKPNVSDFYPFLRPLDLQGLRRWTTKRFNRVFSIMGDIIDRRLAHIRDNKPRHDDFLDSILELMAAGKIDRVNVLNMLFEAFVAGADTMALTLEWVMAELLKNPSVMAKARAELRDVLGDKEIVEEADAARLPYLQAVLKEAMRLHPVGALLLPHFAMEDGVEVGGYAVPKGSTVLFNAWAIMRDAAAWERPDEFVPERFVERTPQLDFRGKDVEFMPFGSGRRLCPGLPLAERVVPFILASMLHTFEWELPGGMTAEELDVSEKFKTANVLAVPLKAVPVLIK.

The chain crosses the membrane as a helical span at residues 4–24; the sequence is SQMWLLWGALSVALFFYFSTL. C442 lines the heme pocket.

Belongs to the cytochrome P450 family. Requires heme as cofactor.

It is found in the membrane. The catalysed reaction is ent-cassa-12,15-diene + reduced [NADPH--hemoprotein reductase] + O2 = ent-11beta-hydroxycassa-12,15-diene + oxidized [NADPH--hemoprotein reductase] + H2O + H(+). The enzyme catalyses ent-sandaracopimaradien-3beta-ol + reduced [NADPH--hemoprotein reductase] + O2 = oryzalexin D + oxidized [NADPH--hemoprotein reductase] + H2O + H(+). Its function is as follows. Enzyme of the diterpenoid metabolism involved in the biosynthesis of both phytocassane and the oryzalexin class of phytoalexins. Can hydroxylate syn-pimaradiene, ent-pimaradiene, ent-sandaracopimaradiene, ent-isokaurene, ent-kaurene, and ent-cassadiene, but no activity with syn-stemodene, syn-stemarene, syn-labdatriene, C11-alpha-hydroxy-ent-cassadiene or syn-pimadien-19-oic acid as substrates. Hydroxylates 3-alpha-hydroxy-ent-sandaracopimaradiene at C-7-beta, resulting in a 3-alpha,7-beta-diol corresponding to oryzalexins D. The protein is Oryzalexin D synthase of Oryza sativa subsp. japonica (Rice).